Reading from the N-terminus, the 465-residue chain is Fumarate hydratase class II (465 aa).

Substrate is bound by residues 99 to 101 (SGT), 130 to 133 (HPND), 140 to 142 (STN), and Thr188. His189 (proton donor/acceptor) is an active-site residue. The active site involves Ser319. Substrate-binding positions include Ser320 and 325-327 (KVN).

Belongs to the class-II fumarase/aspartase family. Fumarase subfamily. As to quaternary structure, homotetramer.

The protein resides in the cytoplasm. The enzyme catalyses (S)-malate = fumarate + H2O. Its pathway is carbohydrate metabolism; tricarboxylic acid cycle; (S)-malate from fumarate: step 1/1. Its function is as follows. Involved in the TCA cycle. Catalyzes the stereospecific interconversion of fumarate to L-malate. This is Fumarate hydratase class II from Prochlorococcus marinus (strain SARG / CCMP1375 / SS120).